The following is a 501-amino-acid chain: Glycerol kinase (501 aa).

Residue Thr17 coordinates ADP. Residues Thr17, Thr18, and Ser19 each contribute to the ATP site. Residue Thr17 coordinates sn-glycerol 3-phosphate. Residue Arg21 participates in ADP binding. Sn-glycerol 3-phosphate is bound by residues Arg87, Glu88, Tyr139, and Asp243. Residues Arg87, Glu88, Tyr139, Asp243, and Gln244 each coordinate glycerol. ADP is bound by residues Thr265 and Gly308. Residues Thr265, Gly308, Gln312, and Gly409 each contribute to the ATP site. Residues Gly409 and Asn413 each coordinate ADP.

This sequence belongs to the FGGY kinase family.

The catalysed reaction is glycerol + ATP = sn-glycerol 3-phosphate + ADP + H(+). Its pathway is polyol metabolism; glycerol degradation via glycerol kinase pathway; sn-glycerol 3-phosphate from glycerol: step 1/1. Inhibited by fructose 1,6-bisphosphate (FBP). Functionally, key enzyme in the regulation of glycerol uptake and metabolism. Catalyzes the phosphorylation of glycerol to yield sn-glycerol 3-phosphate. The polypeptide is Glycerol kinase (Pseudomonas syringae pv. syringae (strain B728a)).